We begin with the raw amino-acid sequence, 436 residues long: GTPase Der (436 aa).

2 consecutive EngA-type G domains span residues 4-167 (PTIA…PNEE) and 175-351 (IKFS…QSQN). Residues 10–17 (GRPNVGKS), 57–61 (DTGGI), 119–122 (NKVD), 181–188 (GRPNVGKS), 229–233 (DTAGM), and 294–297 (NKWD) each bind GTP. The KH-like domain occupies 352–436 (TRIPSAVLND…PIHLIARKRK (85 aa)).

This sequence belongs to the TRAFAC class TrmE-Era-EngA-EngB-Septin-like GTPase superfamily. EngA (Der) GTPase family. As to quaternary structure, associates with the 50S ribosomal subunit.

Its function is as follows. GTPase that plays an essential role in the late steps of ribosome biogenesis. The polypeptide is GTPase Der (Streptococcus gordonii (strain Challis / ATCC 35105 / BCRC 15272 / CH1 / DL1 / V288)).